The following is a 550-amino-acid chain: Natural resistance-associated macrophage protein 1 (550 aa).

The segment at 1–45 (MTGDKGPQRLSGSSYGSISSPTSPTSPGPQQAPPRETYLSEKIPI) is disordered. At 1 to 58 (MTGDKGPQRLSGSSYGSISSPTSPTSPGPQQAPPRETYLSEKIPIPDTKPGTFSLRKL) the chain is on the cytoplasmic side. The span at 11–23 (SGSSYGSISSPTS) shows a compositional bias: low complexity. Residues 59 to 76 (WAFTGPGFLMSIAFLDPG) traverse the membrane as a helical segment. Over 77–85 (NIESDLQAG) the chain is Extracellular. A helical transmembrane segment spans residues 86-105 (AVAGFKLLWVLLWATVLGLL). Over 106 to 142 (CQRLAARLGVVTGKDLGEVCHLYYPKVPRTVLWLTIE) the chain is Cytoplasmic. A helical membrane pass occupies residues 143 to 163 (LAIVGSDMQEVIGTAIAFNLL). Residues 164–167 (SAGR) are Extracellular-facing. The chain crosses the membrane as a helical span at residues 168-187 (IPLWGGVLITIVDTFFFLFL). Residues 188–196 (DNYGLRKLE) are Cytoplasmic-facing. A helical membrane pass occupies residues 197 to 217 (AFFGLLITIMALTFGYEYVVA). Residues 218–240 (RPEQGALLRGLFLPSCPGCGHPE) lie on the Extracellular side of the membrane. Residues 241-259 (LLQAVGIVGAIIMPHNIYL) form a helical membrane-spanning segment. Topologically, residues 260 to 287 (HSALVKSREIDRARRADIREANMYFLIE) are cytoplasmic. A helical transmembrane segment spans residues 288-307 (ATIALSVSFIINLFVMAVFG). At 308–349 (QAFYQKTNQAAFNICANSSLHDYAKIFPMNNATVAVDIYQGG) the chain is on the extracellular side. N-linked (GlcNAc...) asparagine glycans are attached at residues Asn-324 and Asn-338. The chain crosses the membrane as a helical span at residues 350–369 (VILGCLFGPAALYIWAIGLL). Residues 370 to 400 (AAGQSSTMTGTYAGQFVMEGFLRLRWSRFAR) are Cytoplasmic-facing. The helical transmembrane segment at 401 to 418 (VLLTRSCAILPTVLVAVF) threads the bilayer. Over 419–429 (RDLRDLSGLND) the chain is Extracellular. A helical membrane pass occupies residues 430–450 (LLNVLQSLLLPFAVLPILTFT). At 451–466 (SMPTLMQEFANGLLNK) the chain is on the cytoplasmic side. A helical transmembrane segment spans residues 467 to 488 (VVTSSIMVLVCAINLYFVVSYL). Topologically, residues 489–496 (PSLPHPAY) are extracellular. The chain crosses the membrane as a helical span at residues 497–516 (FGLAALLAAAYLGLSTYLVW). Residues 517 to 550 (TCCLAHGATFLAHSSHHHFLYGLLEEDQKGETSG) are Cytoplasmic-facing.

It belongs to the NRAMP family. As to expression, macrophages; peripheral blood leukocytes, lung, spleen and liver.

The protein localises to the late endosome membrane. The protein resides in the lysosome membrane. It carries out the reaction Zn(2+)(in) + H(+)(out) = Zn(2+)(out) + H(+)(in). The catalysed reaction is Fe(2+)(in) + H(+)(out) = Fe(2+)(out) + H(+)(in). The enzyme catalyses Mn(2+)(in) + H(+)(out) = Mn(2+)(out) + H(+)(in). Functionally, macrophage-specific antiporter that fluxes metal ions in either direction against a proton gradient. Localized to late endosomal lysosomal membranes, delivers bivalent cations from the cytosol into these acidic compartments where they may directly affect antimicrobial activity. Involved in iron metabolism and host natural resistance to infection with intracellular parasites. Pathogen resistance involves sequestration of Fe(2+) and Mn(2+), cofactors of both prokaryotic and eukaryotic catalases and superoxide dismutases, not only to protect the macrophage against its own generation of reactive oxygen species, but to deny the cations to the pathogen for synthesis of its protective enzymes. This Homo sapiens (Human) protein is Natural resistance-associated macrophage protein 1.